A 115-amino-acid chain; its full sequence is Large ribosomal subunit protein bL19 (115 aa).

Belongs to the bacterial ribosomal protein bL19 family.

This protein is located at the 30S-50S ribosomal subunit interface and may play a role in the structure and function of the aminoacyl-tRNA binding site. This is Large ribosomal subunit protein bL19 from Desulforapulum autotrophicum (strain ATCC 43914 / DSM 3382 / VKM B-1955 / HRM2) (Desulfobacterium autotrophicum).